Consider the following 798-residue polypeptide: Penicillin-binding protein 1A (798 aa).

The Cytoplasmic segment spans residues 1-9; it reads MIKKIMTTC. A helical; Signal-anchor for type II membrane protein transmembrane segment spans residues 10–30; sequence FGLVFGLCVFAVGLLAIAILA. Over 31-798 the chain is Periplasmic; sequence TYPKLPSLDS…SKRQQLDSLF (768 aa). The tract at residues 50-218 is transglycosylase; that stretch reads LTVYSADGKI…SAYNPIVNPE (169 aa). The Proton donor; for transglycosylase activity role is filled by glutamate 88. Residues 378-700 are transpeptidase; sequence RRALGFAARA…GTIAVPVWVD (323 aa). The active-site Acyl-ester intermediate; for transpeptidase activity is the serine 461. The tract at residues 739-798 is disordered; sequence LMLDNGGAAPQPSRRVKEDDGGAAEGGRQEADDESRQDMQETPVLPSNTDSKRQQLDSLF. Composition is skewed to basic and acidic residues over residues 765-777 and 788-798; these read GRQEADDESRQDM and DSKRQQLDSLF.

In the N-terminal section; belongs to the glycosyltransferase 51 family. The protein in the C-terminal section; belongs to the transpeptidase family.

Its subcellular location is the cell inner membrane. It carries out the reaction [GlcNAc-(1-&gt;4)-Mur2Ac(oyl-L-Ala-gamma-D-Glu-L-Lys-D-Ala-D-Ala)](n)-di-trans,octa-cis-undecaprenyl diphosphate + beta-D-GlcNAc-(1-&gt;4)-Mur2Ac(oyl-L-Ala-gamma-D-Glu-L-Lys-D-Ala-D-Ala)-di-trans,octa-cis-undecaprenyl diphosphate = [GlcNAc-(1-&gt;4)-Mur2Ac(oyl-L-Ala-gamma-D-Glu-L-Lys-D-Ala-D-Ala)](n+1)-di-trans,octa-cis-undecaprenyl diphosphate + di-trans,octa-cis-undecaprenyl diphosphate + H(+). The enzyme catalyses Preferential cleavage: (Ac)2-L-Lys-D-Ala-|-D-Ala. Also transpeptidation of peptidyl-alanyl moieties that are N-acyl substituents of D-alanine.. Its pathway is cell wall biogenesis; peptidoglycan biosynthesis. Its function is as follows. Cell wall formation. Synthesis of cross-linked peptidoglycan from the lipid intermediates. The enzyme has a penicillin-insensitive transglycosylase N-terminal domain (formation of linear glycan strands) and a penicillin-sensitive transpeptidase C-terminal domain (cross-linking of the peptide subunits). The sequence is that of Penicillin-binding protein 1A (mrcA) from Neisseria lactamica.